Reading from the N-terminus, the 201-residue chain is 3-isopropylmalate dehydratase small subunit (201 aa).

This sequence belongs to the LeuD family. LeuD type 1 subfamily. Heterodimer of LeuC and LeuD.

It carries out the reaction (2R,3S)-3-isopropylmalate = (2S)-2-isopropylmalate. It participates in amino-acid biosynthesis; L-leucine biosynthesis; L-leucine from 3-methyl-2-oxobutanoate: step 2/4. Functionally, catalyzes the isomerization between 2-isopropylmalate and 3-isopropylmalate, via the formation of 2-isopropylmaleate. This chain is 3-isopropylmalate dehydratase small subunit, found in Escherichia coli O45:K1 (strain S88 / ExPEC).